Here is a 171-residue protein sequence, read N- to C-terminus: Endoribonuclease YbeY (171 aa).

Residues H126, H130, and H136 each contribute to the Zn(2+) site.

Belongs to the endoribonuclease YbeY family. Requires Zn(2+) as cofactor.

It localises to the cytoplasm. Its function is as follows. Single strand-specific metallo-endoribonuclease involved in late-stage 70S ribosome quality control and in maturation of the 3' terminus of the 16S rRNA. This Rhizobium leguminosarum bv. trifolii (strain WSM2304) protein is Endoribonuclease YbeY.